The chain runs to 631 residues: Chaperone protein DnaK (631 aa).

At T197 the chain carries Phosphothreonine; by autocatalysis. A disordered region spans residues 600-631 (KKENPQAADAQQGNTANAGKKKDDDVIDAEVE).

Belongs to the heat shock protein 70 family.

Its function is as follows. Acts as a chaperone. This Wolinella succinogenes (strain ATCC 29543 / DSM 1740 / CCUG 13145 / JCM 31913 / LMG 7466 / NCTC 11488 / FDC 602W) (Vibrio succinogenes) protein is Chaperone protein DnaK.